The chain runs to 91 residues: UPF0213 protein NMA2126 (91 aa).

The GIY-YIG domain maps to 4 to 83 (SNWSLYLILC…AAQKRKLWEQ (80 aa)).

Belongs to the UPF0213 family.

This Neisseria meningitidis serogroup A / serotype 4A (strain DSM 15465 / Z2491) protein is UPF0213 protein NMA2126.